Consider the following 520-residue polypeptide: Acetyltransferase MAT1 (520 aa).

Catalysis depends on proton acceptor residues His183 and Asp456.

It belongs to the plant acyltransferase family.

The protein operates within secondary metabolite biosynthesis. Functionally, acyl-CoA-dependent acyltransferase; part of the gene cluster that mediates the biosynthesis of mannosylerythritol lipids (MELs), surface-active substances that enhance the availability of water-insoluble substrates. Depending on the number of acetyl groups, mannosylerythritol lipids can be differentiated into MEL A (fully acetylated), MEL B and MEL C (monoacetylated at R-6 and R-4, respectively), and the fully deacetylated MEL D. The first step in the pathway is the generation of mannosylerythritol by the glycosyltransferase EMT1 which catalyzes the transfer of GDP-mannose to the C-4 atom of meso-erythritol. This reaction has to be stereospecific, since only mannosyl-D-erythritol is generated. The produced disaccharide is subsequently acylated with fatty acids of various lengths by the acyltransferases MAC1 and MAC2 at positions C-2 and C-3, repectively. The existence of MEL derivatives which carry an acetyl group at C-2 implies that at least MAC1 also accepts acetyl-CoA as a donor. The final step of MEL biosynthesis is the acetylation of the fully acylated mannosylerythritol lipids catalyzed by the acetyl-CoA-dependent acetyltransferase MAT1. MAT1 displays a relaxed regioselectivity and is able to transfer acetylgroups to both positions C-4 and C-6 of the mannosyl moiety. This Pseudozyma antarctica (strain T-34) (Yeast) protein is Acetyltransferase MAT1.